The sequence spans 470 residues: Glutamate--tRNA ligase (470 aa).

Residues 9-19 carry the 'HIGH' region motif; the sequence is PSPTGFLHVGG. Residues 236 to 240 carry the 'KMSKS' region motif; the sequence is KLSKR. Lysine 239 provides a ligand contact to ATP.

It belongs to the class-I aminoacyl-tRNA synthetase family. Glutamate--tRNA ligase type 1 subfamily. Monomer.

It is found in the cytoplasm. The catalysed reaction is tRNA(Glu) + L-glutamate + ATP = L-glutamyl-tRNA(Glu) + AMP + diphosphate. Catalyzes the attachment of glutamate to tRNA(Glu) in a two-step reaction: glutamate is first activated by ATP to form Glu-AMP and then transferred to the acceptor end of tRNA(Glu). The polypeptide is Glutamate--tRNA ligase (Psychromonas ingrahamii (strain DSM 17664 / CCUG 51855 / 37)).